Reading from the N-terminus, the 374-residue chain is Isopentenyl-diphosphate delta-isomerase (374 aa).

Residue 13–14 (RK) participates in substrate binding. Residues 71 to 73 (GMT), Ser104, and Asn132 contribute to the FMN site. 104-106 (SQR) contributes to the substrate binding site. Gln171 is a binding site for substrate. A Mg(2+)-binding site is contributed by Glu172. FMN-binding positions include Lys203, Thr233, 282-284 (GMR), and 303-304 (AL).

The protein belongs to the IPP isomerase type 2 family. Homooctamer. Dimer of tetramers. Requires FMN as cofactor. It depends on NADPH as a cofactor. Mg(2+) is required as a cofactor.

The protein localises to the cytoplasm. It carries out the reaction isopentenyl diphosphate = dimethylallyl diphosphate. Functionally, involved in the biosynthesis of isoprenoids. Catalyzes the 1,3-allylic rearrangement of the homoallylic substrate isopentenyl (IPP) to its allylic isomer, dimethylallyl diphosphate (DMAPP). This Thermococcus onnurineus (strain NA1) protein is Isopentenyl-diphosphate delta-isomerase.